The following is a 596-amino-acid chain: Beta-fructofuranosidase, insoluble isoenzyme 6 (596 aa).

The signal sequence occupies residues 1 to 25; sequence MALAGLPLSVFAIAVHFCLVFSSSS. Substrate is bound by residues 49-52, Gln68, and Trp76; that span reads WQND. Asp52 is a catalytic residue. The N-linked (GlcNAc...) asparagine glycan is linked to Asn80. Residues 113 to 114, 177 to 178, and Glu232 contribute to the substrate site; these read AS and RD. An N-linked (GlcNAc...) asparagine glycan is attached at Asn335. A disulfide bond links Cys436 and Cys482. Residue Asn556 is glycosylated (N-linked (GlcNAc...) asparagine).

It belongs to the glycosyl hydrolase 32 family. Expressed in roots. Weakly expressed in flowers.

Its subcellular location is the secreted. The protein resides in the extracellular space. It is found in the apoplast. The protein localises to the cell wall. The enzyme catalyses Hydrolysis of terminal non-reducing beta-D-fructofuranoside residues in beta-D-fructofuranosides.. The chain is Beta-fructofuranosidase, insoluble isoenzyme 6 (CIN6) from Oryza sativa subsp. japonica (Rice).